Consider the following 165-residue polypeptide: Phosphopantetheine adenylyltransferase (165 aa).

Substrate is bound at residue Ser-9. Residues 9–10 and His-17 each bind ATP; that span reads SF. Substrate-binding residues include Lys-41, Ile-75, and Arg-89. ATP contacts are provided by residues 90 to 92, Glu-100, and 125 to 131; these read GVR and YLFVRSD.

This sequence belongs to the bacterial CoaD family. In terms of assembly, homohexamer. Mg(2+) serves as cofactor.

Its subcellular location is the cytoplasm. The enzyme catalyses (R)-4'-phosphopantetheine + ATP + H(+) = 3'-dephospho-CoA + diphosphate. Its pathway is cofactor biosynthesis; coenzyme A biosynthesis; CoA from (R)-pantothenate: step 4/5. Reversibly transfers an adenylyl group from ATP to 4'-phosphopantetheine, yielding dephospho-CoA (dPCoA) and pyrophosphate. This chain is Phosphopantetheine adenylyltransferase, found in Borrelia hermsii (strain HS1 / DAH).